The sequence spans 616 residues: Auxin efflux carrier component 4 (616 aa).

Residues 1-7 lie on the Extracellular side of the membrane; the sequence is MITWHDL. Residues 8–28 traverse the membrane as a helical segment; that stretch reads YTVLTAVVPLYVAMILAYGSV. Over 29–38 the chain is Cytoplasmic; sequence QWWKIFSPDQ. Residues 39–59 traverse the membrane as a helical segment; sequence CSGINRFVAIFAVPLLSFHFI. Val51 serves as a coordination point for (indol-3-yl)acetate. Residues 60–70 lie on the Extracellular side of the membrane; it reads STNDPYAMNFR. A helical transmembrane segment spans residues 71-91; that stretch reads FVAADTLQKIIMLVLLALWAN. At 92–101 the chain is on the cytoplasmic side; the sequence is LTKNGSLEWM. A helical membrane pass occupies residues 102 to 122; sequence ITIFSLSTLPNTLVMGIPLLI. Positions 112 and 114 each coordinate (indol-3-yl)acetate. At 123–131 the chain is on the extracellular side; it reads AMYGTYAGS. A helical membrane pass occupies residues 132–152; sequence LMVQVVVLQCIIWYTLLLFLF. Tyr145 serves as a coordination point for (indol-3-yl)acetate. Over 153-476 the chain is Cytoplasmic; it reads EYRGAKLLIM…LIRNPNTYSS (324 aa). 3 positions are modified to phosphoserine: Ser223, Ser240, and Ser280. The disordered stretch occupies residues 302-343; the sequence is AAGSYPAPNPEFSTGTGVSTKPNKIPKENQQQLQEKDSKASH. Residues 312–334 show a composition bias toward polar residues; it reads EFSTGTGVSTKPNKIPKENQQQL. Phosphoserine occurs at positions 358 and 395. Residues 390–411 are disordered; that stretch reads DQPRKSNARGGGDDIGGLDSGE. The span at 398–409 shows a compositional bias: gly residues; that stretch reads RGGGDDIGGLDS. A helical transmembrane segment spans residues 477–497; sequence LIGLIWALVAYRWHVAMPKIL. The Extracellular segment spans residues 498-500; sequence QQS. Residues 501–521 traverse the membrane as a helical segment; the sequence is ISILSDAGLGMAMFSLGLFMA. Residues 522–535 are Cytoplasmic-facing; it reads LQPKIIACGNSVAT. The chain crosses the membrane as a helical span at residues 536–556; sequence FAMAVRFITGPAIMAVAGIAI. Residues 557-561 are Extracellular-facing; that stretch reads GLHGD. Residues 562–582 form a helical membrane-spanning segment; that stretch reads LLRIAIVQAALPQGIVPFVFA. (indol-3-yl)acetate-binding residues include Ile576 and Val577. The Cytoplasmic portion of the chain corresponds to 583 to 595; that stretch reads KEYNVHPTILSTG. Residues 596-616 traverse the membrane as a helical segment; it reads VIFGMLIALPITLVYYILLGL.

This sequence belongs to the auxin efflux carrier (TC 2.A.69.1) family. Homodimer. Expressed in the quiescent center precursors and surrounding cells. Present in columella cells of primary roots. Detected in pollen.

The protein resides in the cell membrane. In terms of biological role, acts as a component of the auxin efflux carrier. Plays a role in generating a sink for auxin into columella cells. Maintains the endogenous auxin gradient, which is essential for correct root patterning. Involved in EXO70A3-regulated gravitropic responses in columella cells and in root system architecture (RSA). Together with PIN3 and PIN7, involved in the connective auxin transport (CAT) that ensures communication across the shoot system, and modulates strigolactone-mediated shoot branching control. The abcb19 pin3 pin4 pin7 quadruple mutant exhibits an additive phenotype on strigolactone-mediated bud outgrowth responses and shoot branching control. This Arabidopsis thaliana (Mouse-ear cress) protein is Auxin efflux carrier component 4.